Consider the following 215-residue polypeptide: Superoxide dismutase [Mn] (215 aa).

The Mn(2+) site is built by histidine 27, histidine 83, aspartate 170, and histidine 174.

This sequence belongs to the iron/manganese superoxide dismutase family. As to quaternary structure, homodimer. Requires Mn(2+) as cofactor.

The enzyme catalyses 2 superoxide + 2 H(+) = H2O2 + O2. Destroys superoxide anion radicals which are normally produced within the cells and which are toxic to biological systems. This is Superoxide dismutase [Mn] (sodA) from Haemophilus influenzae (strain ATCC 51907 / DSM 11121 / KW20 / Rd).